Reading from the N-terminus, the 340-residue chain is N-acetyl-gamma-glutamyl-phosphate reductase (340 aa).

Residue cysteine 146 is part of the active site.

This sequence belongs to the NAGSA dehydrogenase family. Type 1 subfamily.

It localises to the cytoplasm. The catalysed reaction is N-acetyl-L-glutamate 5-semialdehyde + phosphate + NADP(+) = N-acetyl-L-glutamyl 5-phosphate + NADPH + H(+). Its pathway is amino-acid biosynthesis; L-arginine biosynthesis; N(2)-acetyl-L-ornithine from L-glutamate: step 3/4. In terms of biological role, catalyzes the NADPH-dependent reduction of N-acetyl-5-glutamyl phosphate to yield N-acetyl-L-glutamate 5-semialdehyde. The protein is N-acetyl-gamma-glutamyl-phosphate reductase of Streptococcus thermophilus (strain CNRZ 1066).